The sequence spans 309 residues: GTP cyclohydrolase FolE2 (309 aa).

This sequence belongs to the GTP cyclohydrolase IV family.

It catalyses the reaction GTP + H2O = 7,8-dihydroneopterin 3'-triphosphate + formate + H(+). Its pathway is cofactor biosynthesis; 7,8-dihydroneopterin triphosphate biosynthesis; 7,8-dihydroneopterin triphosphate from GTP: step 1/1. In terms of biological role, converts GTP to 7,8-dihydroneopterin triphosphate. The chain is GTP cyclohydrolase FolE2 from Serratia proteamaculans (strain 568).